Here is a 522-residue protein sequence, read N- to C-terminus: Pectinesterase/pectinesterase inhibitor PPE8B (522 aa).

An N-terminal signal peptide occupies residues 1 to 30; the sequence is MPYLLMASHNPLPAGKQLLLLVLLCAFFSS. The tract at residues 31 to 174 is pectinesterase inhibitor PPE8B; it reads SFIPFASCSI…TSLVQELLTQ (144 aa). N-linked (GlcNAc...) asparagine glycosylation is found at N105, N118, N119, N218, N221, and N274. Positions 208 to 506 are pectinesterase PPE8B; the sequence is DAIVAQDGTG…YTVAQFIEGN (299 aa). T283 and Q313 together coordinate substrate. The active-site Proton donor; for pectinesterase activity is D336. C350 and C370 form a disulfide bridge. D357 serves as the catalytic Nucleophile; for pectinesterase activity. N405 carries an N-linked (GlcNAc...) asparagine glycan. Residues R426 and W428 each contribute to the substrate site. N-linked (GlcNAc...) asparagine glycans are attached at residues N489 and N496.

It in the N-terminal section; belongs to the PMEI family. The protein in the C-terminal section; belongs to the pectinesterase family.

It localises to the secreted. Its subcellular location is the cell wall. The enzyme catalyses [(1-&gt;4)-alpha-D-galacturonosyl methyl ester](n) + n H2O = [(1-&gt;4)-alpha-D-galacturonosyl](n) + n methanol + n H(+). Its pathway is glycan metabolism; pectin degradation; 2-dehydro-3-deoxy-D-gluconate from pectin: step 1/5. Functionally, may have roles in the deposition of pectin in developing tissues and in the wall loosening and cell separation that occurs in cell expansion, fruit ripening and abscission. In Prunus persica (Peach), this protein is Pectinesterase/pectinesterase inhibitor PPE8B.